The sequence spans 355 residues: Ferrochelatase (355 aa).

Fe cation is bound by residues His-214 and Glu-295.

It belongs to the ferrochelatase family.

It localises to the cytoplasm. It catalyses the reaction heme b + 2 H(+) = protoporphyrin IX + Fe(2+). It participates in porphyrin-containing compound metabolism; protoheme biosynthesis; protoheme from protoporphyrin-IX: step 1/1. Functionally, catalyzes the ferrous insertion into protoporphyrin IX. The polypeptide is Ferrochelatase (Burkholderia thailandensis (strain ATCC 700388 / DSM 13276 / CCUG 48851 / CIP 106301 / E264)).